The chain runs to 869 residues: H(+)/Cl(-) exchange transporter 6 (869 aa).

The Cytoplasmic segment spans residues 1–80 (MAGCRGSLCC…KKGRWYEVVK (80 aa)). 2 helical membrane-spanning segments follow: residues 81–113 (WTVV…FGVV) and 128–150 (LSLL…LVLI). A Selectivity filter part_1 motif is present at residues 156–160 (GSGIP). Ser-157 lines the chloride pocket. The segment at residues 159-166 (IPEIKCYL) is an intramembrane region (helical). 2 helical membrane passes run 176-194 (RLRT…VAGG) and 200-217 (EGPM…LPQF). The short motif at 198–202 (GKEGP) is the Selectivity filter part_2 element. 2 intramembrane regions (helical) span residues 241–253 (FVSA…IAAA) and 257–265 (PIGATLFSL). 3 helical membrane-spanning segments follow: residues 277–294 (TWKV…LNFF), 335–364 (GFFV…YRMR), and 371–392 (KLVR…VFVA). 3 N-linked (GlcNAc...) asparagine glycosylation sites follow: Asn-410, Asn-422, and Asn-432. 2 consecutive transmembrane segments (helical) span residues 462-481 (PITL…WTYG) and 487-511 (GLFV…KSYI). Positions 487-491 (GLFVP) match the Selectivity filter part_3 motif. Residue Phe-489 coordinates chloride. The helical intramembrane region spans 519–533 (GTFSLIGAAALLGGV). Residues 534–536 (VRM) constitute an intramembrane region (note=Loop between two helices). The helical intramembrane region spans 537–548 (TISLTVILIEST). Residues 549–552 (NEIT) constitute an intramembrane region (note=Loop between two helices). A helical membrane pass occupies residues 553-571 (YGLPIMITLMVAKWTGDFF). Topologically, residues 572–869 (NKGIYDIHVG…ARLRQHYQTI (298 aa)) are cytoplasmic. Tyr-576 provides a ligand contact to chloride. One can recognise a CBS 1 domain in the interval 605-662 (MEPNLTYVYPHTRIQSLVSILRTTVHHAFPVVTENRGNEKEFMKGNQLISNNIKFKKS). 630–632 (HHA) contributes to the ATP binding site. Positions 668–687 (AGEQRRRSQSMKSYPSSELR) are disordered. The segment covering 677–686 (SMKSYPSSEL) has biased composition (polar residues). A Phosphoserine modification is found at Ser-773. A CBS 2 domain is found at 807-868 (MNPSPFTVSP…QARLRQHYQT (62 aa)). 849–852 (TRHN) is a binding site for ATP.

It belongs to the chloride channel (TC 2.A.49) family. ClC-6/CLCN6 subfamily. N-glycosylated on several asparagine residues.

The protein localises to the late endosome membrane. It carries out the reaction 2 chloride(in) + H(+)(out) = 2 chloride(out) + H(+)(in). Its function is as follows. Voltage-gated channel mediating the exchange of chloride ions against protons. Functions as antiporter and contributes to the acidification of the late endosome lumen. The CLC channel family contains both chloride channels and proton-coupled anion transporters that exchange chloride or another anion for protons. The presence of conserved gating glutamate residues is typical for family members that function as antiporters. The polypeptide is H(+)/Cl(-) exchange transporter 6 (CLCN6) (Oryctolagus cuniculus (Rabbit)).